Consider the following 420-residue polypeptide: Proteasome-activating nucleotidase (420 aa).

A disordered region spans residues 1 to 25; it reads MRSHLVKPGSVYDGIEPGELGETTE. Residues 22 to 79 adopt a coiled-coil conformation; that stretch reads ETTESVQDRVRQLESRNSFLEEQCSQIESEKRYLENQKIKYEREIRKLQSELDRMKTS. ATP contacts are provided by residues 203–208 and H342; that span reads GTGKTL. The interval 418-420 is docks into pockets in the proteasome alpha-ring to cause gate opening; it reads MFV.

The protein belongs to the AAA ATPase family. As to quaternary structure, homohexamer. The hexameric complex has a two-ring architecture resembling a top hat that caps the 20S proteasome core at one or both ends. Upon ATP-binding, the C-terminus of PAN interacts with the alpha-rings of the proteasome core by binding to the intersubunit pockets.

Its subcellular location is the cytoplasm. In terms of biological role, ATPase which is responsible for recognizing, binding, unfolding and translocation of substrate proteins into the archaeal 20S proteasome core particle. Is essential for opening the gate of the 20S proteasome via an interaction with its C-terminus, thereby allowing substrate entry and access to the site of proteolysis. Thus, the C-termini of the proteasomal ATPase function like a 'key in a lock' to induce gate opening and therefore regulate proteolysis. Unfolding activity requires energy from ATP hydrolysis, whereas ATP binding alone promotes ATPase-20S proteasome association which triggers gate opening, and supports translocation of unfolded substrates. This chain is Proteasome-activating nucleotidase, found in Methanosarcina mazei (strain ATCC BAA-159 / DSM 3647 / Goe1 / Go1 / JCM 11833 / OCM 88) (Methanosarcina frisia).